We begin with the raw amino-acid sequence, 320 residues long: tRNA(Ile)-lysidine synthase, chloroplastic (320 aa).

Position 31 to 36 (31 to 36 (SGGKDS)) interacts with ATP.

The protein belongs to the tRNA(Ile)-lysidine synthase family.

The protein resides in the plastid. The protein localises to the chloroplast. It catalyses the reaction cytidine(34) in tRNA(Ile2) + L-lysine + ATP = lysidine(34) in tRNA(Ile2) + AMP + diphosphate + H(+). Its function is as follows. Ligates lysine onto the cytidine present at position 34 of the AUA codon-specific tRNA(Ile) that contains the anticodon CAU, in an ATP-dependent manner. Cytidine is converted to lysidine, thus changing the amino acid specificity of the tRNA from methionine to isoleucine. The protein is tRNA(Ile)-lysidine synthase, chloroplastic of Gracilaria tenuistipitata var. liui (Red alga).